We begin with the raw amino-acid sequence, 383 residues long: Succinyl-diaminopimelate desuccinylase (383 aa).

H68 lines the Zn(2+) pocket. D70 is a catalytic residue. Zn(2+) is bound at residue D100. The Proton acceptor role is filled by E130. E131, E159, and H352 together coordinate Zn(2+).

The protein belongs to the peptidase M20A family. DapE subfamily. Homodimer. It depends on Zn(2+) as a cofactor. Co(2+) serves as cofactor.

It carries out the reaction N-succinyl-(2S,6S)-2,6-diaminopimelate + H2O = (2S,6S)-2,6-diaminopimelate + succinate. Its pathway is amino-acid biosynthesis; L-lysine biosynthesis via DAP pathway; LL-2,6-diaminopimelate from (S)-tetrahydrodipicolinate (succinylase route): step 3/3. In terms of biological role, catalyzes the hydrolysis of N-succinyl-L,L-diaminopimelic acid (SDAP), forming succinate and LL-2,6-diaminopimelate (DAP), an intermediate involved in the bacterial biosynthesis of lysine and meso-diaminopimelic acid, an essential component of bacterial cell walls. The polypeptide is Succinyl-diaminopimelate desuccinylase (Granulibacter bethesdensis (strain ATCC BAA-1260 / CGDNIH1)).